The following is a 124-amino-acid chain: Small ribosomal subunit protein uS12 (124 aa).

Positions 1-32 (MPTINQLVRKGRRDKTAKVKTAALKGSPQRRG) are disordered. Asp89 bears the 3-methylthioaspartic acid mark. Positions 104-124 (TQGVKGRKQARSRYGAKKEKS) are disordered. The segment covering 108 to 118 (KGRKQARSRYG) has biased composition (basic residues).

Belongs to the universal ribosomal protein uS12 family. Part of the 30S ribosomal subunit. Contacts proteins S8 and S17. May interact with IF1 in the 30S initiation complex.

Functionally, with S4 and S5 plays an important role in translational accuracy. Its function is as follows. Interacts with and stabilizes bases of the 16S rRNA that are involved in tRNA selection in the A site and with the mRNA backbone. Located at the interface of the 30S and 50S subunits, it traverses the body of the 30S subunit contacting proteins on the other side and probably holding the rRNA structure together. The combined cluster of proteins S8, S12 and S17 appears to hold together the shoulder and platform of the 30S subunit. The polypeptide is Small ribosomal subunit protein uS12 (Rhodococcus erythropolis (strain PR4 / NBRC 100887)).